We begin with the raw amino-acid sequence, 189 residues long: Casparian strip membrane protein 1 (189 aa).

At 1 to 25 the chain is on the cytoplasmic side; sequence MMQAESGSAEAKGPLPPPVGRKRRG. Residues 26–46 traverse the membrane as a helical segment; that stretch reads LGILDFLLRLLAIGATLSAAI. Residues 47 to 73 lie on the Extracellular side of the membrane; that stretch reads TMGTTNETLQFFTQFFQFKARFYDLSA. N-linked (GlcNAc...) asparagine glycosylation is present at Asn52. A helical membrane pass occupies residues 74–94; that stretch reads FIYFVIANAIVGGYLLLSLPI. Residues 95-108 lie on the Cytoplasmic side of the membrane; it reads SILNIVRPRAASSR. The helical transmembrane segment at 109-129 threads the bilayer; it reads VFLIFFDTVMVAVCTSGAAAA. At 130–158 the chain is on the extracellular side; the sequence is VAILYVARKGNSRTNWFAICQRFNSFCNQ. Residues 159–179 traverse the membrane as a helical segment; the sequence is AIGAVSASFAGVVFLILLVLL. At 180 to 189 the chain is on the cytoplasmic side; that stretch reads SASTLYRRRP.

The protein belongs to the Casparian strip membrane proteins (CASP) family. In terms of assembly, homodimer and heterodimers.

Its subcellular location is the cell membrane. Its function is as follows. Regulates membrane-cell wall junctions and localized cell wall deposition. Required for establishment of the Casparian strip membrane domain (CSD) and the subsequent formation of Casparian strips, a cell wall modification of the root endodermis that determines an apoplastic barrier between the intraorganismal apoplasm and the extraorganismal apoplasm and prevents lateral diffusion. This is Casparian strip membrane protein 1 from Picea glauca (White spruce).